Consider the following 262-residue polypeptide: MRNSYRFLASSLSVVVSLLLIPEDVCEKIIGGNEVTPHSRPYMVLLSLDRKTICAGALIAKDWVLTAAHCNLNKRSQVILGAHSITREEPTKQIMLVKKEFPYPCYDPATREGDLKLLQLMEKAKINKYVTILHLPKKGDDVKPGTMCQVAGWGRTHNSASWSDTLREVNITIIDRKVCNDRNHYNFNPVIGMNMVCAGSLRGGRDSCNGDSGSPLLCEGVFRGVTSFGLENKCGDPRGPGVYILLSKKHLNWIIMTIKGAV.

A signal peptide spans 1-26 (MRNSYRFLASSLSVVVSLLLIPEDVC). A propeptide spans 27-28 (EK) (activation peptide). Residues 29–259 (IIGGNEVTPH…HLNWIIMTIK (231 aa)) form the Peptidase S1 domain. An intrachain disulfide couples Cys54 to Cys70. Residues His69 and Asp114 each act as charge relay system in the active site. 3 cysteine pairs are disulfide-bonded: Cys148–Cys218, Cys179–Cys197, and Cys208–Cys234. An N-linked (GlcNAc...) asparagine glycan is attached at Asn170. Ser212 acts as the Charge relay system in catalysis.

It belongs to the peptidase S1 family. Granzyme subfamily. As to quaternary structure, homodimer; disulfide-linked. Interacts with APEX1.

It is found in the secreted. It localises to the cytoplasmic granule. It carries out the reaction Hydrolysis of proteins, including fibronectin, type IV collagen and nucleolin. Preferential cleavage: -Arg-|-Xaa-, -Lys-|-Xaa- &gt;&gt; -Phe-|-Xaa- in small molecule substrates.. In terms of biological role, abundant protease in the cytosolic granules of cytotoxic T-cells and NK-cells which activates caspase-independent pyroptosis when delivered into the target cell through the immunological synapse. It cleaves after Lys or Arg. Once delivered into the target cell, acts by catalyzing cleavage of gasdermin-B (GSDMB), releasing the pore-forming moiety of GSDMB, thereby triggering pyroptosis and target cell death. Cleaves APEX1 after 'Lys-31' and destroys its oxidative repair activity. Cleaves the nucleosome assembly protein SET after 'Lys-189', which disrupts its nucleosome assembly activity and allows the SET complex to translocate into the nucleus to nick and degrade the DNA. The chain is Granzyme A from Homo sapiens (Human).